The primary structure comprises 508 residues: 2-isopropylmalate synthase (508 aa).

Residues 5–267 (IKIFDTTLRD…THRIDTTQIY (263 aa)) form the Pyruvate carboxyltransferase domain. Residues aspartate 14, histidine 202, histidine 204, and asparagine 238 each contribute to the Mn(2+) site. The segment at 390-508 (VIDSFQINSG…SEIGESIISQ (119 aa)) is regulatory domain.

It belongs to the alpha-IPM synthase/homocitrate synthase family. LeuA type 1 subfamily. In terms of assembly, homodimer. Requires Mn(2+) as cofactor.

Its subcellular location is the cytoplasm. It carries out the reaction 3-methyl-2-oxobutanoate + acetyl-CoA + H2O = (2S)-2-isopropylmalate + CoA + H(+). It functions in the pathway amino-acid biosynthesis; L-leucine biosynthesis; L-leucine from 3-methyl-2-oxobutanoate: step 1/4. Catalyzes the condensation of the acetyl group of acetyl-CoA with 3-methyl-2-oxobutanoate (2-ketoisovalerate) to form 3-carboxy-3-hydroxy-4-methylpentanoate (2-isopropylmalate). The polypeptide is 2-isopropylmalate synthase (Ruminiclostridium cellulolyticum (strain ATCC 35319 / DSM 5812 / JCM 6584 / H10) (Clostridium cellulolyticum)).